We begin with the raw amino-acid sequence, 368 residues long: MKAVVIEDGKAVVKEGVPIPELEEGFVLIKTLAVAGNPTDWAHIDYKVGPQGSILGCDAAGQIVKLGPAVDPKDFSIGDYIYGFIHGSSVRFPSNGAFAEYSAISTVVAYKSPNELKFLGEDVLPAGPVRSLEGAATIPVSLTTAGLVLTYNLGLNLKWEPSTPQRNGPILLWGGATAVGQSLIQLANKLNGFTKIIVVASRKHEKLLKEYGADQLFDYHDIDVVEQIKHKYNNISYLVDCVANQNTLQQVYKCAADKQDATVVELTNLTEENVKKENRRQNVTIDRTRLYSIGGHEVPFGGITFPADPEARRAATEFVKFINPKISDGQIHHIPARVYKNGLYDVPRILEDIKIGKNSGEKLVAVLN.

This sequence belongs to the YCR102c/YLR460c/YNL134c family.

This is an uncharacterized protein from Saccharomyces cerevisiae (strain ATCC 204508 / S288c) (Baker's yeast).